The sequence spans 402 residues: Caspase-1 (402 aa).

The region spanning 1 to 91 is the CARD domain; the sequence is MADKILRAKR…YLAGILELQS (91 aa). A propeptide spanning residues 1–118 is cleaved from the precursor; that stretch reads MADKILRAKR…PSSSETKEEQ (118 aa). Residues 98–125 form a disordered region; the sequence is FVATEDSKGGHPSSSETKEEQNKEDGTF. Positions 113–123 are enriched in basic and acidic residues; it reads ETKEEQNKEDG. Catalysis depends on residues His236 and Cys284. The propeptide occupies 297–314; that stretch reads SVRDSEEDFLTDAIFEDD. Phosphoserine is present on Ser301. An Omega-N-methylarginine modification is found at Arg343.

Belongs to the peptidase C14A family. In terms of assembly, heterotetramer that consists of two anti-parallel arranged heterodimers, each one formed by a 20 kDa (Caspase-1 subunit p20) and a 10 kDa (Caspase-1 subunit p10) subunit. May be a component of the inflammasome, a protein complex which also includes PYCARD, CARD8 and NLRP2 and whose function would be the activation of pro-inflammatory caspases. Component of the AIM2 PANoptosome complex, a multiprotein complex that drives inflammatory cell death (PANoptosis). Both the p10 and p20 subunits interact with MEFV. Interacts with CARD17P/INCA and CARD18. Interacts with SERPINB1; this interaction regulates CASP1 activity. As to quaternary structure, heterotetramer that consists of two anti-parallel arranged heterodimers, each one formed by a 20 kDa (Caspase-1 subunit p20) and a 10 kDa (Caspase-1 subunit p10) subunit. The two subunits are derived from the precursor sequence by an autocatalytic mechanism. Post-translationally, ubiquitinated via 'Lys-11'-linked polyubiquitination. Deubiquitinated by USP8. In terms of tissue distribution, high level expression seen in spleen and lung, low level expression seen in brain, heart, liver, kidney, testis and skeletal muscle.

The protein localises to the cytoplasm. It is found in the cell membrane. It carries out the reaction Strict requirement for an Asp residue at position P1 and has a preferred cleavage sequence of Tyr-Val-Ala-Asp-|-.. Functionally, thiol protease involved in a variety of inflammatory processes by proteolytically cleaving other proteins, such as the precursors of the inflammatory cytokines interleukin-1 beta (IL1B) and interleukin 18 (IL18) as well as the pyroptosis inducer Gasdermin-D (GSDMD), into active mature peptides. Plays a key role in cell immunity as an inflammatory response initiator: once activated through formation of an inflammasome complex, it initiates a pro-inflammatory response through the cleavage of the two inflammatory cytokines IL1B and IL18, releasing the mature cytokines which are involved in a variety of inflammatory processes. Cleaves a tetrapeptide after an Asp residue at position P1. Also initiates pyroptosis, a programmed lytic cell death pathway, through cleavage of GSDMD. In contrast to cleavage of interleukin IL1B, recognition and cleavage of GSDMD is not strictly dependent on the consensus cleavage site but depends on an exosite interface on CASP1 that recognizes and binds the Gasdermin-D, C-terminal (GSDMD-CT) part. Cleaves and activates CASP7 in response to bacterial infection, promoting plasma membrane repair. Upon inflammasome activation, during DNA virus infection but not RNA virus challenge, controls antiviral immunity through the cleavage of CGAS, rendering it inactive. In apoptotic cells, cleaves SPHK2 which is released from cells and remains enzymatically active extracellularly. This is Caspase-1 (Casp1) from Mus musculus (Mouse).